The following is a 400-amino-acid chain: S-adenosylmethionine decarboxylase proenzyme (400 aa).

Catalysis depends on residues Glu-18 and Glu-21. The Schiff-base intermediate with substrate; via pyruvic acid role is filled by Ser-78. Position 78 is a pyruvic acid (Ser); by autocatalysis (Ser-78). The active-site Proton donor; for catalytic activity is the Cys-92. Catalysis depends on proton acceptor; for processing activity residues Ser-243 and His-256.

The protein belongs to the eukaryotic AdoMetDC family. Pyruvate serves as cofactor. In terms of processing, is synthesized initially as an inactive proenzyme. Formation of the active enzyme involves a self-maturation process in which the active site pyruvoyl group is generated from an internal serine residue via an autocatalytic post-translational modification. Two non-identical subunits are generated from the proenzyme in this reaction, and the pyruvate is formed at the N-terminus of the alpha chain, which is derived from the carboxyl end of the proenzyme. The post-translation cleavage follows an unusual pathway, termed non-hydrolytic serinolysis, in which the side chain hydroxyl group of the serine supplies its oxygen atom to form the C-terminus of the beta chain, while the remainder of the serine residue undergoes an oxidative deamination to produce ammonia and the pyruvoyl group blocking the N-terminus of the alpha chain.

The enzyme catalyses S-adenosyl-L-methionine + H(+) = S-adenosyl 3-(methylsulfanyl)propylamine + CO2. It functions in the pathway amine and polyamine biosynthesis; S-adenosylmethioninamine biosynthesis; S-adenosylmethioninamine from S-adenosyl-L-methionine: step 1/1. This chain is S-adenosylmethionine decarboxylase proenzyme (SAMDC), found in Zea mays (Maize).